The following is a 230-amino-acid chain: Uracil-DNA glycosylase (230 aa).

The Proton acceptor role is filled by aspartate 71.

This sequence belongs to the uracil-DNA glycosylase (UDG) superfamily. UNG family.

Its subcellular location is the cytoplasm. The catalysed reaction is Hydrolyzes single-stranded DNA or mismatched double-stranded DNA and polynucleotides, releasing free uracil.. Its function is as follows. Excises uracil residues from the DNA which can arise as a result of misincorporation of dUMP residues by DNA polymerase or due to deamination of cytosine. This chain is Uracil-DNA glycosylase, found in Nocardioides sp. (strain ATCC BAA-499 / JS614).